Here is a 323-residue protein sequence, read N- to C-terminus: MGRRSFIRGTGSYLPERVLTNDELSEMVETTDAWIQERTGIKKRHVAADGELTSDIAVHAARRALEAAGMQASEIDLIVLATTTPDQTFPATATAVQAKLGTGPGAAFDVQAVCSGFLFALATADSLMKQGLFHKALVIGAETFTRIIDWSDRGTCVLFGDGGGAIVLECVEWDGADDAGVITHHVRTDGTKSNLLYVDGGVSSTGTIGHVRMEGNKVFKHAVTNISAAIEAVLTETGLTSADIDWFVPHQANKRILDGVAKKMSIPEEKVVITVSEHANTSAASIPLALDHVVRSGRAKPGDLILSEAMGGGFSWGASLFRL.

Active-site residues include cysteine 114 and histidine 250. Positions 251–255 (QANKR) are ACP-binding. Asparagine 280 is an active-site residue.

This sequence belongs to the thiolase-like superfamily. FabH family. In terms of assembly, homodimer.

Its subcellular location is the cytoplasm. It catalyses the reaction malonyl-[ACP] + acetyl-CoA + H(+) = 3-oxobutanoyl-[ACP] + CO2 + CoA. Its pathway is lipid metabolism; fatty acid biosynthesis. In terms of biological role, catalyzes the condensation reaction of fatty acid synthesis by the addition to an acyl acceptor of two carbons from malonyl-ACP. Catalyzes the first condensation reaction which initiates fatty acid synthesis and may therefore play a role in governing the total rate of fatty acid production. Possesses both acetoacetyl-ACP synthase and acetyl transacylase activities. Its substrate specificity determines the biosynthesis of branched-chain and/or straight-chain of fatty acids. The protein is Beta-ketoacyl-[acyl-carrier-protein] synthase III of Hyphomonas neptunium (strain ATCC 15444).